The sequence spans 1102 residues: MDADWDEVTRIAFPAPGSNDYPRPATALAFDTIAELLWAGNDRGRVVSFYGRDLQRYTAFKIHPPSEGPVRQFLFHDKGVIALGTRSVHMAMRRGPTLWNIRHDEMENLQCMSFTSKGASEIIVAGFQDTMFVIDVVKGEIVKQKSKYICAATRTGCVDLLDPITFKTVRSWQAHASYINDMDAQNDFIVTCGGSLKQQAAQTYMLDPYVNVFDLKNMTSMKPMPFPPLAAHVRLHPRMLTTSIVTSQHGQMHVVDIMNPNTSNVRYANVMSFINLFEIAPSGEALAMADTECNIHLWGSPSKIHFTDMAIPIEMPKAEEPAPMLDWSPDTPLSSIGMPYYREQLFSAWPSDIISDIGAPPVQLDPSFLASLKQMEWGFYGRNSRGLRRNQVEDTRACMKPSMQPPKFLSEKARESAMSYSAAVPDPKVEQVPESSTDELESLKPEAPPIYRNLEIKYSKFGVDDFDFGYYNKTQYAGLENHIPNSYANSLLQLIHYTPLLRNMALQHAATACVTDLCLLCELGFVFDMLQKAEGSTCQATNMFKALGATPQAAPLGLLEEETHVPSLSTMSQGLSRFLFDRINHDYRSINPISTTLEQTLFNLPQPPTPDELVSRVLATSAVVTIKCMNCRSETTRPGTAQVNDLMYPPPKGSARGGRMHKTTFSQVLKTGVERETASKGWCSRCQRYQNLQMRKTIHSVPAVLAINSAISSQEHRKLWATPGWLPEEIGIIVDQGQFFCFEGEDLKLHLQRGMHNITVYSLIGMVVNIESSSPQKTHLVSVINVAHADAAPSAESKWHLFNDFSVRPISTAEALTFNAAWKLPAVLLFQVKAANNKTNMDWKTKLDTSLLYQDLTPHSDEKTYHVLDLEAEPPGPDTIVGLDTEFVSLKQPEIQMNSDGERETIRPMSHALARVSVVRGQGEHEGEAFIDDYIAIREPVVDYLTLYSGITPGDLDPRTTKHNLVSLKVAYKKLWVLLNLGCKFLGHGLRQDFRVINIQVPRAQVIDTIQVFYLKARLRKLSLAFLAWFLLKEDIQLETHDSIEDARTALKLYRKYLEFEDAGILEAMLEDIYKVGRATNFKPPRKDDQVIQRTDTPFLSR.

WD repeat units lie at residues 20-59, 104-144, and 269-308; these read DYPR…RYTA, DEME…IVKQ, and NVMS…HFTD. Positions 308–445 are linker; sequence DMAIPIEMPK…STDELESLKP (138 aa). Positions 423–442 are disordered; it reads AVPDPKVEQVPESSTDELES. The region spanning 446–833 is the USP domain; it reads EAPPIYRNLE…LPAVLLFQVK (388 aa). Residues 881-1054 form the Exonuclease domain; sequence VGLDTEFVSL…EDARTALKLY (174 aa). A divalent metal cation is bound by residues D884, E886, D993, and D1046.

The protein belongs to the peptidase C19 family. PAN2 subfamily. As to quaternary structure, forms a heterotrimer with an asymmetric homodimer of the regulatory subunit PAN3 to form the poly(A)-nuclease (PAN) deadenylation complex. A divalent metal cation serves as cofactor.

It localises to the cytoplasm. It catalyses the reaction Exonucleolytic cleavage of poly(A) to 5'-AMP.. With respect to regulation, positively regulated by the regulatory subunit PAN3. Functionally, catalytic subunit of the poly(A)-nuclease (PAN) deadenylation complex, one of two cytoplasmic mRNA deadenylases involved in mRNA turnover. PAN specifically shortens poly(A) tails of RNA and the activity is stimulated by poly(A)-binding protein PAB1. PAN deadenylation is followed by rapid degradation of the shortened mRNA tails by the CCR4-NOT complex. Deadenylated mRNAs are then degraded by two alternative mechanisms, namely exosome-mediated 3'-5' exonucleolytic degradation, or deadenylation-dependent mRNA decaping and subsequent 5'-3' exonucleolytic degradation by XRN1. May also be involved in post-transcriptional maturation of mRNA poly(A) tails. The chain is PAN2-PAN3 deadenylation complex catalytic subunit PAN2 from Chaetomium globosum (strain ATCC 6205 / CBS 148.51 / DSM 1962 / NBRC 6347 / NRRL 1970) (Soil fungus).